Here is a 555-residue protein sequence, read N- to C-terminus: 2-succinyl-5-enolpyruvyl-6-hydroxy-3-cyclohexene-1-carboxylate synthase (555 aa).

It belongs to the TPP enzyme family. MenD subfamily. As to quaternary structure, homodimer. Requires Mg(2+) as cofactor. Mn(2+) is required as a cofactor. It depends on thiamine diphosphate as a cofactor.

The enzyme catalyses isochorismate + 2-oxoglutarate + H(+) = 5-enolpyruvoyl-6-hydroxy-2-succinyl-cyclohex-3-ene-1-carboxylate + CO2. Its pathway is quinol/quinone metabolism; 1,4-dihydroxy-2-naphthoate biosynthesis; 1,4-dihydroxy-2-naphthoate from chorismate: step 2/7. It functions in the pathway quinol/quinone metabolism; menaquinone biosynthesis. Functionally, catalyzes the thiamine diphosphate-dependent decarboxylation of 2-oxoglutarate and the subsequent addition of the resulting succinic semialdehyde-thiamine pyrophosphate anion to isochorismate to yield 2-succinyl-5-enolpyruvyl-6-hydroxy-3-cyclohexene-1-carboxylate (SEPHCHC). The protein is 2-succinyl-5-enolpyruvyl-6-hydroxy-3-cyclohexene-1-carboxylate synthase of Kineococcus radiotolerans (strain ATCC BAA-149 / DSM 14245 / SRS30216).